The chain runs to 135 residues: 30 kDa antigenic glycoprotein (135 aa).

Residues 1 to 5 (GNTYS) form the signal peptide. N-linked (GlcNAc...) asparagine glycosylation is found at asparagine 22, asparagine 31, asparagine 57, and asparagine 73.

To H.contortus 15 kDa excretory/secretory protein.

Its subcellular location is the secreted. This is 30 kDa antigenic glycoprotein from Trichostrongylus colubriformis (Black scour worm).